We begin with the raw amino-acid sequence, 209 residues long: High frequency lysogenization protein HflD homolog (209 aa).

This sequence belongs to the HflD family.

Its subcellular location is the cytoplasm. The protein resides in the cell inner membrane. This Marinomonas sp. (strain MWYL1) protein is High frequency lysogenization protein HflD homolog.